A 683-amino-acid chain; its full sequence is Methionine--tRNA ligase (683 aa).

The 'HIGH' region motif lies at 15-25 (YYPSGKLHIGN). The 'KMSKS' region motif lies at 311 to 315 (KMSKS). Residue lysine 314 participates in ATP binding. The tRNA-binding domain occupies 581–683 (DFDKVELKVA…DNMVNGSLIS (103 aa)).

Belongs to the class-I aminoacyl-tRNA synthetase family. MetG type 2B subfamily. Homodimer.

It localises to the cytoplasm. It catalyses the reaction tRNA(Met) + L-methionine + ATP = L-methionyl-tRNA(Met) + AMP + diphosphate. Its function is as follows. Is required not only for elongation of protein synthesis but also for the initiation of all mRNA translation through initiator tRNA(fMet) aminoacylation. This Lactiplantibacillus plantarum (strain ATCC BAA-793 / NCIMB 8826 / WCFS1) (Lactobacillus plantarum) protein is Methionine--tRNA ligase.